We begin with the raw amino-acid sequence, 232 residues long: 5'-methylthioadenosine/S-adenosylhomocysteine nucleosidase (232 aa).

The Proton acceptor role is filled by Glu12. Residues Gly78, Ile152, and 173–174 (ME) each bind substrate. The active-site Proton donor is the Asp197.

This sequence belongs to the PNP/UDP phosphorylase family. MtnN subfamily. In terms of assembly, homodimer.

It catalyses the reaction S-adenosyl-L-homocysteine + H2O = S-(5-deoxy-D-ribos-5-yl)-L-homocysteine + adenine. It carries out the reaction S-methyl-5'-thioadenosine + H2O = 5-(methylsulfanyl)-D-ribose + adenine. The enzyme catalyses 5'-deoxyadenosine + H2O = 5-deoxy-D-ribose + adenine. It participates in amino-acid biosynthesis; L-methionine biosynthesis via salvage pathway; S-methyl-5-thio-alpha-D-ribose 1-phosphate from S-methyl-5'-thioadenosine (hydrolase route): step 1/2. Catalyzes the irreversible cleavage of the glycosidic bond in both 5'-methylthioadenosine (MTA) and S-adenosylhomocysteine (SAH/AdoHcy) to adenine and the corresponding thioribose, 5'-methylthioribose and S-ribosylhomocysteine, respectively. Also cleaves 5'-deoxyadenosine, a toxic by-product of radical S-adenosylmethionine (SAM) enzymes, into 5-deoxyribose and adenine. Thus, is required for in vivo function of the radical SAM enzymes biotin synthase and lipoic acid synthase, that are inhibited by 5'-deoxyadenosine accumulation. The polypeptide is 5'-methylthioadenosine/S-adenosylhomocysteine nucleosidase (Enterobacter sp. (strain 638)).